The primary structure comprises 257 residues: Diaminopimelate epimerase (257 aa).

Residues N6 and N57 each contribute to the substrate site. The Proton donor role is filled by C66. Residues 67-68, N170, and 188-189 contribute to the substrate site; these read GN and ER. C198 acts as the Proton acceptor in catalysis. 199–200 contacts substrate; that stretch reads GT.

The protein belongs to the diaminopimelate epimerase family. As to quaternary structure, homodimer.

The protein localises to the cytoplasm. It catalyses the reaction (2S,6S)-2,6-diaminopimelate = meso-2,6-diaminopimelate. It participates in amino-acid biosynthesis; L-lysine biosynthesis via DAP pathway; DL-2,6-diaminopimelate from LL-2,6-diaminopimelate: step 1/1. Functionally, catalyzes the stereoinversion of LL-2,6-diaminopimelate (L,L-DAP) to meso-diaminopimelate (meso-DAP), a precursor of L-lysine and an essential component of the bacterial peptidoglycan. The sequence is that of Diaminopimelate epimerase from Chlorobaculum tepidum (strain ATCC 49652 / DSM 12025 / NBRC 103806 / TLS) (Chlorobium tepidum).